We begin with the raw amino-acid sequence, 84 residues long: UPF0457 protein BT9727_2307 (84 aa).

Belongs to the UPF0457 family.

The protein is UPF0457 protein BT9727_2307 of Bacillus thuringiensis subsp. konkukian (strain 97-27).